The chain runs to 248 residues: Protein maestro (248 aa).

The disordered stretch occupies residues 1 to 21 (MDQRQRRILGQPLSIPTSQPK). The HEAT repeat unit spans residues 128–163 (SFFIDITLQTRTLLDDENDSLRYSAFVLFGQLAAFA).

As to expression, ubiquitous.

It localises to the nucleus. The protein localises to the nucleolus. The sequence is that of Protein maestro (MRO) from Homo sapiens (Human).